A 98-amino-acid chain; its full sequence is MKKIWFHLDLQFFASKKGVGSTKNGRDSNPKFLGAKLADGQQAKTGQIIYRQRGNKIWPGKNVGQGKDDTLFALADGIVRYTKFLGNKTKVSVVEQSK.

The propeptide occupies 1-13 (MKKIWFHLDLQFF).

Belongs to the bacterial ribosomal protein bL27 family. In terms of processing, the N-terminus is cleaved by ribosomal processing cysteine protease Prp.

The polypeptide is Large ribosomal subunit protein bL27 (Mycoplasmoides gallisepticum (strain R(low / passage 15 / clone 2)) (Mycoplasma gallisepticum)).